The primary structure comprises 795 residues: Phenylalanine--tRNA ligase beta subunit (795 aa).

A tRNA-binding domain is found at 39 to 148 (AGSFHGVVVG…ADAPIGTDIR (110 aa)). The B5 domain maps to 401 to 476 (PKRATITLRR…RVYGYNNIPD (76 aa)). The Mg(2+) site is built by aspartate 454, aspartate 460, glutamate 463, and glutamate 464. One can recognise an FDX-ACB domain in the interval 701-794 (SRFPANRRDI…LKERFQASLR (94 aa)).

It belongs to the phenylalanyl-tRNA synthetase beta subunit family. Type 1 subfamily. As to quaternary structure, tetramer of two alpha and two beta subunits. Mg(2+) serves as cofactor.

The protein resides in the cytoplasm. The catalysed reaction is tRNA(Phe) + L-phenylalanine + ATP = L-phenylalanyl-tRNA(Phe) + AMP + diphosphate + H(+). This Shigella sonnei (strain Ss046) protein is Phenylalanine--tRNA ligase beta subunit.